We begin with the raw amino-acid sequence, 851 residues long: Envelope glycoprotein gp160 (851 aa).

An N-terminal signal peptide occupies residues 1–31; sequence MKVMGIQRNCQQWWIWGILGFWMLMICNGMG. Residues 32 to 672 are Extracellular-facing; the sequence is NLWVTVYYGV…ITNWLWYIKI (641 aa). Cysteine 53 and cysteine 73 are joined by a disulfide. Asparagine 87, asparagine 135, asparagine 141, asparagine 153, asparagine 157, asparagine 183, and asparagine 194 each carry an N-linked (GlcNAc...) asparagine; by host glycan. 5 disulfides stabilise this stretch: cysteine 118–cysteine 202, cysteine 125–cysteine 193, cysteine 130–cysteine 154, cysteine 215–cysteine 244, and cysteine 225–cysteine 236. Positions 130 to 153 are V1; it reads CNAIKNNTKVTNNSINSANDEMKN. Residues 154 to 193 form a V2 region; it reads CSFNITTELRDKKRKAYALFYKLDIVPLNNGSTDYRLINC. Asparagine 238, asparagine 259, asparagine 273, asparagine 286, asparagine 298, asparagine 328, asparagine 335, and asparagine 351 each carry an N-linked (GlcNAc...) asparagine; by host glycan. The segment at 293 to 326 is V3; that stretch reads CTRPSNNTRESIRIGPGQTFYATGDIIGDIRQAH. The cysteines at positions 293 and 327 are disulfide-linked. Positions 359 to 369 are CD4-binding loop; the sequence is SSGGDLEITTH. 2 cysteine pairs are disulfide-bonded: cysteine 373–cysteine 433 and cysteine 380–cysteine 406. Positions 380–406 are V4; it reads CNTSNLFNSTKLELFNSSTNLNITLQC. N-linked (GlcNAc...) asparagine; by host glycans are attached at residues asparagine 381, asparagine 387, asparagine 395, asparagine 401, and asparagine 436. 2 V5 regions span residues 449–460 and 451–460; these read EPHSTKEIFRPE and HSTKEIFRPE. Residues 501–520 are fusion peptide; that stretch reads AALGALFLGFLGAAGSTMGA. Residues 562–580 form an immunosuppression region; it reads KQLQTRVLAIERHLRDQQL. Residues cysteine 586 and cysteine 592 are joined by a disulfide bond. 5 N-linked (GlcNAc...) asparagine; by host glycosylation sites follow: asparagine 599, asparagine 604, asparagine 613, asparagine 625, and asparagine 662. Residues 621-655 are a coiled coil; the sequence is REISNYTDIIYNLLEVSQNQQDKNEKDLLALDKWE. The MPER; binding to GalCer stretch occupies residues 650 to 671; sequence ALDKWENLWNWFNITNWLWYIK. Residues 673–693 traverse the membrane as a helical segment; the sequence is FIMIVGGVIGLRIIFAVLSIV. Residues 694–851 are Cytoplasmic-facing; it reads NRVRQGYSPL…IRQGLEAALQ (158 aa). A YXXL motif; contains endocytosis signal motif is present at residues 700–703; it reads YSPL. Cysteine 752 carries S-palmitoyl cysteine; by host lipidation.

It belongs to the HIV-1 env protein family. As to quaternary structure, the mature envelope protein (Env) consists of a homotrimer of non-covalently associated gp120-gp41 heterodimers. The resulting complex protrudes from the virus surface as a spike. There seems to be as few as 10 spikes on the average virion. Interacts with host CD4, CCR5 and CXCR4. Gp120 also interacts with the C-type lectins CD209/DC-SIGN and CLEC4M/DC-SIGNR (collectively referred to as DC-SIGN(R)). Gp120 and gp41 interact with GalCer. Gp120 interacts with host ITGA4/ITGB7 complex; on CD4+ T-cells, this interaction results in rapid activation of integrin ITGAL/LFA-1, which facilitates efficient cell-to-cell spreading of HIV-1. Gp120 interacts with cell-associated heparan sulfate; this interaction increases virus infectivity on permissive cells and may be involved in infection of CD4- cells. In terms of assembly, the mature envelope protein (Env) consists of a homotrimer of non-covalently associated gp120-gp41 heterodimers. The resulting complex protrudes from the virus surface as a spike. There seems to be as few as 10 spikes on the average virion. Post-translationally, highly glycosylated by host. The high number of glycan on the protein is reffered to as 'glycan shield' because it contributes to hide protein sequence from adaptive immune system. In terms of processing, palmitoylation of the transmembrane protein and of Env polyprotein (prior to its proteolytic cleavage) is essential for their association with host cell membrane lipid rafts. Palmitoylation is therefore required for envelope trafficking to classical lipid rafts, but not for viral replication. Specific enzymatic cleavages in vivo yield mature proteins. Envelope glycoproteins are synthesized as an inactive precursor that is heavily N-glycosylated and processed likely by host cell furin in the Golgi to yield the mature SU and TM proteins. The cleavage site between SU and TM requires the minimal sequence [KR]-X-[KR]-R. About 2 of the 9 disulfide bonds of gp41 are reduced by P4HB/PDI, following binding to CD4 receptor.

It is found in the virion membrane. The protein localises to the host cell membrane. Its subcellular location is the host endosome membrane. Functionally, oligomerizes in the host endoplasmic reticulum into predominantly trimers. In a second time, gp160 transits in the host Golgi, where glycosylation is completed. The precursor is then proteolytically cleaved in the trans-Golgi and thereby activated by cellular furin or furin-like proteases to produce gp120 and gp41. In terms of biological role, attaches the virus to the host lymphoid cell by binding to the primary receptor CD4. This interaction induces a structural rearrangement creating a high affinity binding site for a chemokine coreceptor like CXCR4 and/or CCR5. Acts as a ligand for CD209/DC-SIGN and CLEC4M/DC-SIGNR, which are respectively found on dendritic cells (DCs), and on endothelial cells of liver sinusoids and lymph node sinuses. These interactions allow capture of viral particles at mucosal surfaces by these cells and subsequent transmission to permissive cells. HIV subverts the migration properties of dendritic cells to gain access to CD4+ T-cells in lymph nodes. Virus transmission to permissive T-cells occurs either in trans (without DCs infection, through viral capture and transmission), or in cis (following DCs productive infection, through the usual CD4-gp120 interaction), thereby inducing a robust infection. In trans infection, bound virions remain infectious over days and it is proposed that they are not degraded, but protected in non-lysosomal acidic organelles within the DCs close to the cell membrane thus contributing to the viral infectious potential during DCs' migration from the periphery to the lymphoid tissues. On arrival at lymphoid tissues, intact virions recycle back to DCs' cell surface allowing virus transmission to CD4+ T-cells. Acts as a class I viral fusion protein. Under the current model, the protein has at least 3 conformational states: pre-fusion native state, pre-hairpin intermediate state, and post-fusion hairpin state. During fusion of viral and target intracellular membranes, the coiled coil regions (heptad repeats) assume a trimer-of-hairpins structure, positioning the fusion peptide in close proximity to the C-terminal region of the ectodomain. The formation of this structure appears to drive apposition and subsequent fusion of viral and target cell membranes. Complete fusion occurs in host cell endosomes and is dynamin-dependent, however some lipid transfer might occur at the plasma membrane. The virus undergoes clathrin-dependent internalization long before endosomal fusion, thus minimizing the surface exposure of conserved viral epitopes during fusion and reducing the efficacy of inhibitors targeting these epitopes. Membranes fusion leads to delivery of the nucleocapsid into the cytoplasm. In Homo sapiens (Human), this protein is Envelope glycoprotein gp160.